The sequence spans 146 residues: D-aminoacyl-tRNA deacylase (146 aa).

The Gly-cisPro motif, important for rejection of L-amino acids signature appears at 138 to 139; the sequence is GP.

The protein belongs to the DTD family. In terms of assembly, homodimer.

It localises to the cytoplasm. It carries out the reaction glycyl-tRNA(Ala) + H2O = tRNA(Ala) + glycine + H(+). The catalysed reaction is a D-aminoacyl-tRNA + H2O = a tRNA + a D-alpha-amino acid + H(+). In terms of biological role, an aminoacyl-tRNA editing enzyme that deacylates mischarged D-aminoacyl-tRNAs. Also deacylates mischarged glycyl-tRNA(Ala), protecting cells against glycine mischarging by AlaRS. Acts via tRNA-based rather than protein-based catalysis; rejects L-amino acids rather than detecting D-amino acids in the active site. By recycling D-aminoacyl-tRNA to D-amino acids and free tRNA molecules, this enzyme counteracts the toxicity associated with the formation of D-aminoacyl-tRNA entities in vivo and helps enforce protein L-homochirality. This Xanthomonas euvesicatoria pv. vesicatoria (strain 85-10) (Xanthomonas campestris pv. vesicatoria) protein is D-aminoacyl-tRNA deacylase.